A 349-amino-acid polypeptide reads, in one-letter code: Ferredoxin--NADP reductase 1 (349 aa).

Glutamate 36, lysine 44, tyrosine 48, valine 88, leucine 123, aspartate 290, and serine 331 together coordinate FAD.

The protein belongs to the ferredoxin--NADP reductase type 2 family. As to quaternary structure, homodimer. FAD is required as a cofactor.

The enzyme catalyses 2 reduced [2Fe-2S]-[ferredoxin] + NADP(+) + H(+) = 2 oxidized [2Fe-2S]-[ferredoxin] + NADPH. The chain is Ferredoxin--NADP reductase 1 from Bacillus cytotoxicus (strain DSM 22905 / CIP 110041 / 391-98 / NVH 391-98).